The primary structure comprises 384 residues: Cytochrome b (384 aa).

Transmembrane regions (helical) follow at residues 32-52, 76-98, 113-133, and 179-199; these read LGSLLGLCLVIQITTGIFLAM, WLIRYMHTNGASFFFICMYIHIG, VWTVGVIIFILTMAAAFLGYC, and FFTFHYLVPFIIAAMVIMHLM. Positions 82 and 96 each coordinate heme b. 2 residues coordinate heme b: His183 and His197. His202 lines the a ubiquinone pocket. The next 4 helical transmembrane spans lie at 225-245, 289-309, 321-341, and 348-368; these read FIFKDLVTVFVFMIFFSLFVF, LGGVITMFGTILVLLMLPITD, LSKFFFFLFITNFILLGKLGE, and FILMGQICTFIYFAYFLILVP.

It belongs to the cytochrome b family. In terms of assembly, fungal cytochrome b-c1 complex contains 10 subunits; 3 respiratory subunits, 2 core proteins and 5 low-molecular weight proteins. Cytochrome b-c1 complex is a homodimer. Requires heme b as cofactor.

Its subcellular location is the mitochondrion inner membrane. Its function is as follows. Component of the ubiquinol-cytochrome c reductase complex (complex III or cytochrome b-c1 complex) that is part of the mitochondrial respiratory chain. The b-c1 complex mediates electron transfer from ubiquinol to cytochrome c. Contributes to the generation of a proton gradient across the mitochondrial membrane that is then used for ATP synthesis. This chain is Cytochrome b (COB), found in Eremothecium gossypii (strain ATCC 10895 / CBS 109.51 / FGSC 9923 / NRRL Y-1056) (Yeast).